We begin with the raw amino-acid sequence, 256 residues long: Ribonuclease HII (256 aa).

The RNase H type-2 domain occupies 67–255 (QLVGGVDEVG…VSEMVGLKKA (189 aa)). A divalent metal cation is bound by residues Asp-73, Glu-74, and Asp-165.

The protein belongs to the RNase HII family. The cofactor is Mn(2+). Requires Mg(2+) as cofactor.

Its subcellular location is the cytoplasm. It carries out the reaction Endonucleolytic cleavage to 5'-phosphomonoester.. Functionally, endonuclease that specifically degrades the RNA of RNA-DNA hybrids. This Lactobacillus delbrueckii subsp. bulgaricus (strain ATCC 11842 / DSM 20081 / BCRC 10696 / JCM 1002 / NBRC 13953 / NCIMB 11778 / NCTC 12712 / WDCM 00102 / Lb 14) protein is Ribonuclease HII.